Here is an 823-residue protein sequence, read N- to C-terminus: Valine--tRNA ligase (823 aa).

A 'HIGH' region motif is present at residues 52-62 (PTVSGVLHMGH). Residues 549-553 (KMSKS) carry the 'KMSKS' region motif. Lys-552 is a binding site for ATP.

It belongs to the class-I aminoacyl-tRNA synthetase family. ValS type 2 subfamily. In terms of assembly, monomer.

It is found in the cytoplasm. It catalyses the reaction tRNA(Val) + L-valine + ATP = L-valyl-tRNA(Val) + AMP + diphosphate. Functionally, catalyzes the attachment of valine to tRNA(Val). As ValRS can inadvertently accommodate and process structurally similar amino acids such as threonine, to avoid such errors, it has a 'posttransfer' editing activity that hydrolyzes mischarged Thr-tRNA(Val) in a tRNA-dependent manner. In Anaplasma marginale (strain St. Maries), this protein is Valine--tRNA ligase.